The sequence spans 52 residues: DNA import protein CedA2 (52 aa).

Transmembrane regions (helical) follow at residues 1–21 (MKSY…VYIY) and 27–47 (ILVS…IIFE).

In terms of assembly, forms a complex composed of CedA, CedA1 and CedA2.

It localises to the cell membrane. In terms of biological role, part of the Ced system, which is involved in DNA import. In Sulfolobus acidocaldarius (strain ATCC 33909 / DSM 639 / JCM 8929 / NBRC 15157 / NCIMB 11770), this protein is DNA import protein CedA2.